The following is a 181-amino-acid chain: Large ribosomal subunit protein eL18 (181 aa).

Belongs to the eukaryotic ribosomal protein eL18 family.

The protein resides in the cytoplasm. The chain is Large ribosomal subunit protein eL18 (rpl18) from Dictyostelium discoideum (Social amoeba).